Consider the following 183-residue polypeptide: Adenine phosphoribosyltransferase (183 aa).

It belongs to the purine/pyrimidine phosphoribosyltransferase family. As to quaternary structure, homodimer.

The protein localises to the cytoplasm. It catalyses the reaction AMP + diphosphate = 5-phospho-alpha-D-ribose 1-diphosphate + adenine. Its pathway is purine metabolism; AMP biosynthesis via salvage pathway; AMP from adenine: step 1/1. In terms of biological role, catalyzes a salvage reaction resulting in the formation of AMP, that is energically less costly than de novo synthesis. The sequence is that of Adenine phosphoribosyltransferase from Salmonella heidelberg (strain SL476).